The sequence spans 151 residues: Protein Smg homolog (151 aa).

This sequence belongs to the Smg family.

The sequence is that of Protein Smg homolog from Laribacter hongkongensis (strain HLHK9).